The following is a 2388-amino-acid chain: Spectrin beta chain, non-erythrocytic 2 (2388 aa).

Ser2 carries the N-acetylserine modification. The tract at residues 2 to 278 (SSTLSPTDFD…IITYVATYYH (277 aa)) is actin-binding. 2 positions are modified to phosphoserine: Ser6 and Ser31. 2 consecutive Calponin-homology (CH) domains span residues 57-161 (AVQK…LRFQ) and 176-281 (KSAK…HYFS). 6 Spectrin repeats span residues 306–414 (LVEK…LALR), 427–527 (AARF…RERL), 532–639 (ELQK…RLEE), 642–744 (RLWR…QRLA), 749–849 (LYQF…RALE), and 856–954 (TMLS…KAAL). A Phosphoserine modification is found at Ser959. Spectrin repeat units lie at residues 960–1063 (IQNY…SLGE), 1066–1169 (RLQD…GRLA), 1174–1266 (FQGF…NQEA), 1279–1379 (EQQH…ARSL), 1384–1485 (RAEL…RRLQ), 1489–1586 (EQHQ…RLEE), 1589–1692 (RAQQ…RLQE), 1696–1797 (LCQL…GQVL), 1801–1904 (YELQ…QLLL), 1910–2010 (FRFF…DWLQ), and 2017–2078 (VFGR…LTAL). Ser1073 carries the phosphoserine modification. Phosphoserine is present on Ser1574. A compositionally biased stretch (basic and acidic residues) spans 2080 to 2096 (ERENEQKRKREEEERRK). Disordered stretches follow at residues 2080-2112 (EREN…EGSL) and 2124-2207 (DGTQ…HVAT). The span at 2124 to 2163 (DGTQSKLPPSTQAPSINGVCTDTESSQPLLEQQRLEQSNV) shows a compositional bias: polar residues. Residues Ser2169 and Ser2199 each carry the phosphoserine modification. A PH domain is found at 2218 to 2328 (QEQMEGTLCR…WLRVVNAAIA (111 aa)). The tract at residues 2333–2388 (ASGEPEEPVVPSASRGLTRAMTMPPVSQPEGSIVLRSKDGREREREKRFSFFKKNK) is disordered. Thr2354 is modified (phosphothreonine). Position 2359 is a phosphoserine (Ser2359). Positions 2368–2381 (RSKDGREREREKRF) are enriched in basic and acidic residues.

Belongs to the spectrin family. As to expression, abundantly transcribed in the brain. Neurons are the predominant cell-type to express the gene. Found abundantly in Purkinje cells.

The protein resides in the cytoplasm. The protein localises to the cytoskeleton. It localises to the cell cortex. Probably plays an important role in neuronal membrane skeleton. The protein is Spectrin beta chain, non-erythrocytic 2 (Sptbn2) of Rattus norvegicus (Rat).